The sequence spans 428 residues: Histidine--tRNA ligase (428 aa).

This sequence belongs to the class-II aminoacyl-tRNA synthetase family. In terms of assembly, homodimer.

The protein resides in the cytoplasm. The catalysed reaction is tRNA(His) + L-histidine + ATP = L-histidyl-tRNA(His) + AMP + diphosphate + H(+). The sequence is that of Histidine--tRNA ligase from Mesomycoplasma hyopneumoniae (strain J / ATCC 25934 / NCTC 10110) (Mycoplasma hyopneumoniae).